Here is a 334-residue protein sequence, read N- to C-terminus: Ribosomal lysine N-methyltransferase 5 (334 aa).

S-adenosyl-L-methionine is bound by residues tryptophan 88, 155 to 157 (GAG), aspartate 177, tryptophan 227, and methionine 254.

The protein belongs to the class I-like SAM-binding methyltransferase superfamily. RKM5 family.

Functionally, S-adenosyl-L-methionine-dependent protein-lysine N-methyltransferase that methylates 60S ribosomal protein L1. The protein is Ribosomal lysine N-methyltransferase 5 (RKM5) of Lachancea thermotolerans (strain ATCC 56472 / CBS 6340 / NRRL Y-8284) (Yeast).